The sequence spans 244 residues: MHNKQLLLAHRGYSFIAPENTKLAFDLAFEYCFDGIELDVHLTKDEQLVIIHDETTLRTALVNKEVEFESLVSLKRDDHSAFFHLKIQFQSILTLKEFLDLYLDKFKLINIEIKTDQKPYLGIEKKLVDLVKGYGKKAIDKILFSSFNFESLQKVYDLDNSYKKGFLFWTKKQFETISTARIQKICQFLHPWTKIYEKYPQMIKKLNLPLNLWTVNSQNKFQQFLADNHVYAQIANKKFEIKIN.

A GP-PDE domain is found at 5 to 244 (QLLLAHRGYS…ANKKFEIKIN (240 aa)).

This sequence to glycerophosphoryl diester phosphodiesterases (EC 3.1.4.46). To M.genitalium MG385.

This is an uncharacterized protein from Mycoplasma genitalium (strain ATCC 33530 / DSM 19775 / NCTC 10195 / G37) (Mycoplasmoides genitalium).